A 99-amino-acid chain; its full sequence is Aspartyl/glutamyl-tRNA(Asn/Gln) amidotransferase subunit C (99 aa).

Belongs to the GatC family. As to quaternary structure, heterotrimer of A, B and C subunits.

The catalysed reaction is L-glutamyl-tRNA(Gln) + L-glutamine + ATP + H2O = L-glutaminyl-tRNA(Gln) + L-glutamate + ADP + phosphate + H(+). The enzyme catalyses L-aspartyl-tRNA(Asn) + L-glutamine + ATP + H2O = L-asparaginyl-tRNA(Asn) + L-glutamate + ADP + phosphate + 2 H(+). In terms of biological role, allows the formation of correctly charged Asn-tRNA(Asn) or Gln-tRNA(Gln) through the transamidation of misacylated Asp-tRNA(Asn) or Glu-tRNA(Gln) in organisms which lack either or both of asparaginyl-tRNA or glutaminyl-tRNA synthetases. The reaction takes place in the presence of glutamine and ATP through an activated phospho-Asp-tRNA(Asn) or phospho-Glu-tRNA(Gln). This Kineococcus radiotolerans (strain ATCC BAA-149 / DSM 14245 / SRS30216) protein is Aspartyl/glutamyl-tRNA(Asn/Gln) amidotransferase subunit C.